The chain runs to 428 residues: 3-phosphoshikimate 1-carboxyvinyltransferase (428 aa).

3 residues coordinate 3-phosphoshikimate: Lys-22, Ser-23, and Arg-27. Lys-22 lines the phosphoenolpyruvate pocket. Positions 96 and 124 each coordinate phosphoenolpyruvate. 6 residues coordinate 3-phosphoshikimate: Ser-171, Ser-172, Gln-173, Ser-198, Asp-311, and Lys-338. Gln-173 serves as a coordination point for phosphoenolpyruvate. Asp-311 (proton acceptor) is an active-site residue. Arg-342 and Arg-383 together coordinate phosphoenolpyruvate.

Belongs to the EPSP synthase family. Monomer.

The protein resides in the cytoplasm. The enzyme catalyses 3-phosphoshikimate + phosphoenolpyruvate = 5-O-(1-carboxyvinyl)-3-phosphoshikimate + phosphate. It participates in metabolic intermediate biosynthesis; chorismate biosynthesis. In terms of biological role, catalyzes the transfer of the enolpyruvyl moiety of phosphoenolpyruvate (PEP) to the 5-hydroxyl of shikimate-3-phosphate (S3P) to produce enolpyruvyl shikimate-3-phosphate and inorganic phosphate. This chain is 3-phosphoshikimate 1-carboxyvinyltransferase, found in Methanopyrus kandleri (strain AV19 / DSM 6324 / JCM 9639 / NBRC 100938).